We begin with the raw amino-acid sequence, 464 residues long: Glutathione reductase (464 aa).

FAD contacts are provided by S17 and G18. Position 17 (S17) interacts with glutathione. Residue R24 participates in glutathione binding. Positions 37, 45, 46, and 54 each coordinate FAD. A disulfide bridge links C46 with C51. Y103 is a glutathione binding site. A119 is a binding site for FAD. The NADP(+) site is built by A186, I189, E192, R209, R215, and G274. Residue D315 coordinates FAD. Residue E321 participates in NADP(+) binding. Residue T323 participates in FAD binding. Residue R331 coordinates glutathione. Position 354 (V354) interacts with NADP(+). Residue H453 participates in FAD binding. H453 (proton acceptor) is an active-site residue.

It belongs to the class-I pyridine nucleotide-disulfide oxidoreductase family. Homodimer. The cofactor is FAD.

The protein resides in the cytoplasm. The protein localises to the mitochondrion. The catalysed reaction is 2 glutathione + NADP(+) = glutathione disulfide + NADPH + H(+). In terms of biological role, catalyzes the reduction of glutathione disulfide (GSSG) to reduced glutathione (GSH). Constitutes the major mechanism to maintain a high GSH:GSSG ratio in the cytosol. The sequence is that of Glutathione reductase (pgr1) from Schizosaccharomyces pombe (strain 972 / ATCC 24843) (Fission yeast).